The following is a 57-amino-acid chain: UPF0391 membrane protein Nwi_2359 (57 aa).

2 consecutive transmembrane segments (helical) span residues 4 to 24 and 30 to 50; these read WVVT…GGIA and IAKI…VVGF.

The protein belongs to the UPF0391 family.

The protein resides in the cell membrane. This Nitrobacter winogradskyi (strain ATCC 25391 / DSM 10237 / CIP 104748 / NCIMB 11846 / Nb-255) protein is UPF0391 membrane protein Nwi_2359.